The following is an 826-amino-acid chain: Outer membrane usher protein YehB (826 aa).

Residues 1 to 22 form the signal peptide; the sequence is MLRMTPLASAIVALLLGIEAYA. A disulfide bridge links Cys809 with Cys825.

The protein belongs to the fimbrial export usher family.

The protein resides in the cell outer membrane. In terms of biological role, part of the yehABCD fimbrial operon. Could contribute to adhesion to various surfaces in specific environmental niches. Probably involved in the export and assembly of fimbrial subunits across the outer membrane. This Escherichia coli (strain K12) protein is Outer membrane usher protein YehB (yehB).